Reading from the N-terminus, the 211-residue chain is MRLLDSKGVHAVFEQLHAANPQPQGELHWRNTFTLLVAVLLSAQATDKSVNKATAALFDVADTPQAMLALGEERLCSYIRTINLYPTKARRIIALSAELIERFAAQVPCDAHALESLPGVGHKTANVVLNMGFGIPTIAVDTHILRTAPRIGLSSGRTPRAVERDLLVVTPREFRMHAHHWILLHGRYTCTARRPRCTECCLRDLCCKNNI.

The region spanning 111 to 130 (AHALESLPGVGHKTANVVLN) is the HhH domain. C190, C197, C200, and C206 together coordinate [4Fe-4S] cluster.

The protein belongs to the Nth/MutY family. [4Fe-4S] cluster is required as a cofactor.

It catalyses the reaction 2'-deoxyribonucleotide-(2'-deoxyribose 5'-phosphate)-2'-deoxyribonucleotide-DNA = a 3'-end 2'-deoxyribonucleotide-(2,3-dehydro-2,3-deoxyribose 5'-phosphate)-DNA + a 5'-end 5'-phospho-2'-deoxyribonucleoside-DNA + H(+). Its function is as follows. DNA repair enzyme that has both DNA N-glycosylase activity and AP-lyase activity. The DNA N-glycosylase activity releases various damaged pyrimidines from DNA by cleaving the N-glycosidic bond, leaving an AP (apurinic/apyrimidinic) site. The AP-lyase activity cleaves the phosphodiester bond 3' to the AP site by a beta-elimination, leaving a 3'-terminal unsaturated sugar and a product with a terminal 5'-phosphate. This Treponema pallidum (strain Nichols) protein is Endonuclease III.